An 810-amino-acid chain; its full sequence is Volume-regulated anion channel subunit LRRC8A (810 aa).

Residue Met1 is modified to N-acetylmethionine. Residues 1-22 are Cytoplasmic-facing; that stretch reads MIPVTELRYFADTQPAYRILKP. Residues 23 to 47 form a helical membrane-spanning segment; it reads WWDVFTDYISIVMLMIAVFGGTLQV. Over 48 to 123 the chain is Extracellular; the sequence is TQDKMICLPC…YENRLHWFAK (76 aa). Intrachain disulfides connect Cys54–Cys310, Cys57–Cys65, and Cys113–Cys295. N-linked (GlcNAc...) asparagine glycans are attached at residues Asn66 and Asn83. The helical transmembrane segment at 124-142 threads the bilayer; the sequence is YFPYLVLLHTLIFLACSNF. Over 143 to 264 the chain is Cytoplasmic; that stretch reads WFKFPRTSSK…EEGDIVYRLY (122 aa). Thr200 is subject to Phosphothreonine. Ser202 carries the post-translational modification Phosphoserine. Position 215 is a phosphothreonine (Thr215). Residue Ser217 is modified to Phosphoserine. The helical transmembrane segment at 265 to 286 threads the bilayer; that stretch reads MRQTIIKVIKFALIICYTVYYV. The Extracellular segment spans residues 287–316; sequence HNIKFDVDCTVDIESLTGYRTYRCAHPLAT. Residues 317 to 341 traverse the membrane as a helical segment; sequence LFKILASFYISLVIFYGLICMYTLW. At 342 to 810 the chain is on the cytoplasmic side; that stretch reads WMLRRSLKKY…RLWRADKEQA (469 aa). 17 LRR repeats span residues 411–422, 423–445, 447–468, 469–492, 493–515, 518–542, 543–565, 567–589, 590–613, 614–637, 639–661, 662–684, 686–707, 708–730, 732–753, 754–776, and 778–801; these read WTLDKLRQRLTK, NAQDKLELHLFMLSGIPDTVFDL, ELEVLKLELIPDVTIPPSIAQL, TGLKELWLYHTAAKIEAPALAFLR, ENLRALHIKFTDIKEIPLWIYSL, LEELHLTGNLSAENNRYIVIDGLRE, LKRLKVLRLKSNLSKLPQVVTDV, VHLQKLSINNEGTKLIVLNSLKK, MVNLTELELIRCDLERIPHSIFSL, HNLQEIDLKDNNLKTIEEIISFQH, HRLTCLKLWYNHIAYIPIQIGNL, TNLERLYLNRNKIEKIPTQLFYC, KLRYLDLSHNNLTFLPADIGLL, QNLQNLAVTANRIEALPPELFQC, KLRALHLGNNVLQSLPSRVGEL, TNLTQIELRGNRLECLPVELGEC, and LLKRSGLVVEEDLFSTLPPEVKER. The Di-leucine motif signature appears at 706-707; it reads LL.

Belongs to the LRRC8 family. As to quaternary structure, heterohexamer; oligomerizes with other LRRC8 proteins (LRRC8B, LRRC8C, LRRC8D and/or LRRC8E) to form a heterohexamer. Can form homohexamers in vitro, but these have lower conductance than heterohexamers. In vivo, the subunit composition may depend primarily on expression levels, and heterooligomeric channels containing various proportions of the different LRRC8 proteins may coexist. Interact with GRB2. Interacts with NOX4; this interaction prevents the ubiquitin-mediated degradation of LRRC8A. Post-translationally, N-glycosylated. Ubiquitously expressed. High levels detected in the bone marrow; lower levels found in peripheral blood cells. Highly expressed in pancreatic beta cells.

The protein localises to the cell membrane. The protein resides in the lysosome membrane. The enzyme catalyses chloride(in) = chloride(out). It carries out the reaction iodide(out) = iodide(in). The catalysed reaction is taurine(out) = taurine(in). It catalyses the reaction L-aspartate(out) = L-aspartate(in). The enzyme catalyses L-glutamate(out) = L-glutamate(in). It carries out the reaction myo-inositol(out) = myo-inositol(in). The catalysed reaction is 2',3'-cGAMP(out) = 2',3'-cGAMP(in). Inhibited by (4-[(2-butyl-6,7-dichloro-2-cyclopentyl-2,3-dihydro-1-oxo-1H-inden-5-yl)oxy]butanoic acid), which plugs the channel like a cork in a bottle by binding in the extracellular selectivity filter and sterically occluding ion conduction. Lipids may block conduction in closed heterohexameric channels. In terms of biological role, essential component of the volume-regulated anion channel (VRAC, also named VSOAC channel), an anion channel required to maintain a constant cell volume in response to extracellular or intracellular osmotic changes. The VRAC channel conducts iodide better than chloride and can also conduct organic osmolytes like taurine. Mediates efflux of amino acids, such as aspartate and glutamate, in response to osmotic stress. In complex with LRRC8C or LRRC8E, acts as a transporter of immunoreactive cyclic dinucleotide GMP-AMP (2'-3'-cGAMP), an immune messenger produced in response to DNA virus in the cytosol: mediates both import and export of 2'-3'-cGAMP, thereby promoting transfer of 2'-3'-cGAMP to bystander cells. In contrast, complexes containing LRRC8D inhibit transport of 2'-3'-cGAMP. Required for in vivo channel activity, together with at least one other family member (LRRC8B, LRRC8C, LRRC8D or LRRC8E); channel characteristics depend on the precise subunit composition. Can form functional channels by itself (in vitro). Involved in B-cell development: required for the pro-B cell to pre-B cell transition. Also required for T-cell development. Required for myoblast differentiation: VRAC activity promotes membrane hyperpolarization and regulates insulin-stimulated glucose metabolism and oxygen consumption. Also acts as a regulator of glucose-sensing in pancreatic beta cells: VRAC currents, generated in response to hypotonicity- or glucose-induced beta cell swelling, depolarize cells, thereby causing electrical excitation, leading to increase glucose sensitivity and insulin secretion. Also plays a role in lysosome homeostasis by forming functional lysosomal VRAC channels in response to low cytoplasmic ionic strength condition: lysosomal VRAC channels are necessary for the formation of large lysosome-derived vacuoles, which store and then expel excess water to maintain cytosolic water homeostasis. Acts as a key factor in NLRP3 inflammasome activation by modulating itaconate efflux and mitochondria function. This chain is Volume-regulated anion channel subunit LRRC8A, found in Mus musculus (Mouse).